The chain runs to 36 residues: Egg-laying-like hormone (36 aa).

K36 carries the lysine amide modification.

As to expression, supra, subesophageal ganglia and segmental ganglia of the ventral nerve cord and brain.

Its function is as follows. May be involved in leech reproduction. This Theromyzon tessulatum (Duck leech) protein is Egg-laying-like hormone.